A 156-amino-acid polypeptide reads, in one-letter code: UPF0266 membrane protein YobD (156 aa).

The Periplasmic portion of the chain corresponds to 1-5 (MTITD). The chain crosses the membrane as a helical span at residues 6 to 26 (LVLILFIAALLAYALYDQFIM). At 27–44 (PRRNGPTLLSIALLRRGR) the chain is on the cytoplasmic side. Residues 45-65 (VDSVIFVGLVAILIYNNVTSH) form a helical membrane-spanning segment. Gly66 is a topological domain (periplasmic). The helical transmembrane segment at 67-87 (AQMTTWLLSALALMGFYIFWI) threads the bilayer. Topologically, residues 88–156 (RTPRIIFKQR…LLIENQYLKI (69 aa)) are cytoplasmic.

Belongs to the UPF0266 family.

It is found in the cell inner membrane. The protein is UPF0266 membrane protein YobD (yobD) of Salmonella typhimurium (strain LT2 / SGSC1412 / ATCC 700720).